Reading from the N-terminus, the 361-residue chain is RNA 3'-terminal phosphate cyclase (361 aa).

Residues glutamine 109 and 293 to 297 (HLADQ) each bind ATP. The Tele-AMP-histidine intermediate role is filled by histidine 319.

This sequence belongs to the RNA 3'-terminal cyclase family. Type 1 subfamily.

The protein localises to the cytoplasm. The enzyme catalyses a 3'-end 3'-phospho-ribonucleotide-RNA + ATP = a 3'-end 2',3'-cyclophospho-ribonucleotide-RNA + AMP + diphosphate. Functionally, catalyzes the conversion of 3'-phosphate to a 2',3'-cyclic phosphodiester at the end of RNA. The mechanism of action of the enzyme occurs in 3 steps: (A) adenylation of the enzyme by ATP; (B) transfer of adenylate to an RNA-N3'P to produce RNA-N3'PP5'A; (C) and attack of the adjacent 2'-hydroxyl on the 3'-phosphorus in the diester linkage to produce the cyclic end product. The biological role of this enzyme is unknown but it is likely to function in some aspects of cellular RNA processing. This Methylococcus capsulatus (strain ATCC 33009 / NCIMB 11132 / Bath) protein is RNA 3'-terminal phosphate cyclase.